We begin with the raw amino-acid sequence, 190 residues long: Translation initiation factor IF-3 (190 aa).

It belongs to the IF-3 family. Monomer.

It localises to the cytoplasm. Functionally, IF-3 binds to the 30S ribosomal subunit and shifts the equilibrium between 70S ribosomes and their 50S and 30S subunits in favor of the free subunits, thus enhancing the availability of 30S subunits on which protein synthesis initiation begins. The polypeptide is Translation initiation factor IF-3 (Prochlorococcus marinus (strain AS9601)).